Here is a 468-residue protein sequence, read N- to C-terminus: Probable acid phosphatase DIA3 (468 aa).

The first 20 residues, 1–20, serve as a signal peptide directing secretion; that stretch reads MVKPVIFAICLGVLLSKALS. Residue His-76 is the Nucleophile of the active site. Residues Asn-98, Asn-163, Asn-193, Asn-202, Asn-238, Asn-251, and Asn-316 are each glycosylated (N-linked (GlcNAc...) asparagine). Catalysis depends on Asp-339, which acts as the Proton donor. 4 N-linked (GlcNAc...) asparagine glycosylation sites follow: Asn-357, Asn-391, Asn-457, and Asn-462.

This sequence belongs to the histidine acid phosphatase family.

It catalyses the reaction a phosphate monoester + H2O = an alcohol + phosphate. The protein is Probable acid phosphatase DIA3 (DIA3) of Saccharomyces cerevisiae (strain ATCC 204508 / S288c) (Baker's yeast).